Reading from the N-terminus, the 184-residue chain is UPF0149 protein PP_5201 (184 aa).

It belongs to the UPF0149 family.

This chain is UPF0149 protein PP_5201, found in Pseudomonas putida (strain ATCC 47054 / DSM 6125 / CFBP 8728 / NCIMB 11950 / KT2440).